The primary structure comprises 339 residues: Geranylgeranyl transferase type-2 subunit beta (339 aa).

Threonine 11 bears the Phosphothreonine mark. 6 PFTB repeats span residues 28-69 (LEKH…DLMG), 76-117 (REEI…TLYD), 124-165 (VDKV…ALLG), 172-213 (VEKA…AITS), 220-261 (SDLL…KIIG), and 268-310 (REKL…SLLG). Geranylgeranyl diphosphate-binding positions include 198–200 (HAG) and 240–243 (RPEK). The Zn(2+) site is built by aspartate 246 and cysteine 248. Geranylgeranyl diphosphate contacts are provided by residues tyrosine 249 and 249-252 (YSWW). Histidine 298 is a binding site for Zn(2+).

It belongs to the protein prenyltransferase subunit beta family. Heterotrimer composed of RABGGTA, RABGGTB and CHM; within this trimer, RABGGTA and RABGGTB form the catalytic component B, while CHM (component A) mediates peptide substrate binding. The Rab GGTase dimer (RGGT) interacts with CHM (component A) prior to Rab protein binding; the association is stabilized by geranylgeranyl pyrophosphate (GGpp). The CHM:RGGT:Rab complex is destabilized by GGpp. Interaction of RABGGTB with prenylated PTP4A2 precludes its association with RABGGTA and inhibits enzyme activity. Interacts with CHODL. Interacts with non-phosphorylated form of RAB8A; phosphorylation of RAB8A at 'Thr-72' disrupts this interaction. Requires Zn(2+) as cofactor. In terms of tissue distribution, ubiquitous. Detected in all the major organs in adult animals.

It catalyses the reaction geranylgeranyl diphosphate + L-cysteinyl-[protein] = S-geranylgeranyl-L-cysteinyl-[protein] + diphosphate. The enzymatic reaction requires the aid of a Rab escort protein (also called component A), such as CHM. In terms of biological role, catalyzes the transfer of a geranylgeranyl moiety from geranylgeranyl diphosphate to both cysteines of Rab proteins with the C-terminal sequence -XXCC, -XCXC and -CCXX, such as RAB1A, RAB3A, RAB5A and RAB7A. This Mus musculus (Mouse) protein is Geranylgeranyl transferase type-2 subunit beta (Rabggtb).